Consider the following 106-residue polypeptide: Urease subunit beta (106 aa).

Belongs to the urease beta subunit family. In terms of assembly, heterotrimer of UreA (gamma), UreB (beta) and UreC (alpha) subunits. Three heterotrimers associate to form the active enzyme.

The protein localises to the cytoplasm. The enzyme catalyses urea + 2 H2O + H(+) = hydrogencarbonate + 2 NH4(+). Its pathway is nitrogen metabolism; urea degradation; CO(2) and NH(3) from urea (urease route): step 1/1. The chain is Urease subunit beta from Synechococcus sp. (strain CC9605).